The chain runs to 223 residues: Ribose-5-phosphate isomerase A (223 aa).

Residues threonine 29 to threonine 32, aspartate 82 to aspartate 85, and lysine 95 to glycine 98 each bind substrate. Residue glutamate 104 is the Proton acceptor of the active site. Lysine 122 contacts substrate.

The protein belongs to the ribose 5-phosphate isomerase family. As to quaternary structure, homodimer.

The catalysed reaction is aldehydo-D-ribose 5-phosphate = D-ribulose 5-phosphate. It functions in the pathway carbohydrate degradation; pentose phosphate pathway; D-ribose 5-phosphate from D-ribulose 5-phosphate (non-oxidative stage): step 1/1. Its function is as follows. Catalyzes the reversible conversion of ribose-5-phosphate to ribulose 5-phosphate. The protein is Ribose-5-phosphate isomerase A of Neisseria meningitidis serogroup C / serotype 2a (strain ATCC 700532 / DSM 15464 / FAM18).